Reading from the N-terminus, the 44-residue chain is Large ribosomal subunit protein bL34 (44 aa).

Belongs to the bacterial ribosomal protein bL34 family.

This Neorickettsia sennetsu (strain ATCC VR-367 / Miyayama) (Ehrlichia sennetsu) protein is Large ribosomal subunit protein bL34.